The primary structure comprises 209 residues: Peroxiredoxin (209 aa).

In terms of domain architecture, Thioredoxin spans 2–156; that stretch reads PLIGDKFPEM…IVRMIRAFRV (155 aa). Cysteine 44 acts as the Cysteine sulfenic acid (-SOH) intermediate in catalysis. Position 119 (arginine 119) interacts with substrate. An intrachain disulfide couples cysteine 198 to cysteine 204.

Belongs to the peroxiredoxin family. Prx6 subfamily. Homodecamer. Pentamer of dimers that assemble into a ring structure.

The protein resides in the cytoplasm. It catalyses the reaction a hydroperoxide + [thioredoxin]-dithiol = an alcohol + [thioredoxin]-disulfide + H2O. Its function is as follows. Thiol-specific peroxidase that catalyzes the reduction of hydrogen peroxide and organic hydroperoxides to water and alcohols, respectively. Plays a role in cell protection against oxidative stress by detoxifying peroxides. This chain is Peroxiredoxin, found in Methanothermobacter thermautotrophicus (strain ATCC 29096 / DSM 1053 / JCM 10044 / NBRC 100330 / Delta H) (Methanobacterium thermoautotrophicum).